The chain runs to 142 residues: MANERTLSIIKPDAVAKNVIGEIYSRFEKADLKIVAAKMMHLTQEQAEGFYAEHKERPFFNDLVAFMTSGPVVVQVLEGEGAILKNRELMGATNPKEAEAGTIRADFASSIDANAVHGSDSAASAEREVAYFFNDNEICPRG.

Residues lysine 11, phenylalanine 59, arginine 87, threonine 93, arginine 104, and asparagine 114 each coordinate ATP. Residue histidine 117 is the Pros-phosphohistidine intermediate of the active site.

It belongs to the NDK family. As to quaternary structure, homotetramer. Mg(2+) serves as cofactor.

The protein resides in the cytoplasm. The enzyme catalyses a 2'-deoxyribonucleoside 5'-diphosphate + ATP = a 2'-deoxyribonucleoside 5'-triphosphate + ADP. It catalyses the reaction a ribonucleoside 5'-diphosphate + ATP = a ribonucleoside 5'-triphosphate + ADP. Its function is as follows. Major role in the synthesis of nucleoside triphosphates other than ATP. The ATP gamma phosphate is transferred to the NDP beta phosphate via a ping-pong mechanism, using a phosphorylated active-site intermediate. The polypeptide is Nucleoside diphosphate kinase (Marinobacter nauticus (strain ATCC 700491 / DSM 11845 / VT8) (Marinobacter aquaeolei)).